A 111-amino-acid polypeptide reads, in one-letter code: Nucleoid-associated protein PSEEN1789 (111 aa).

Disordered regions lie at residues 1–25 and 89–111; these read MMKG…KMQE and NSQD…KMPF.

Belongs to the YbaB/EbfC family. As to quaternary structure, homodimer.

The protein resides in the cytoplasm. It localises to the nucleoid. Binds to DNA and alters its conformation. May be involved in regulation of gene expression, nucleoid organization and DNA protection. The sequence is that of Nucleoid-associated protein PSEEN1789 from Pseudomonas entomophila (strain L48).